The primary structure comprises 282 residues: Pantothenate synthetase (282 aa).

Met30–His37 lines the ATP pocket. His37 serves as the catalytic Proton donor. Gln61 contributes to the (R)-pantoate binding site. Residue Gln61 coordinates beta-alanine. Residue Gly147–Asp150 coordinates ATP. A (R)-pantoate-binding site is contributed by Gln153. ATP is bound by residues Ile176 and Lys184–Arg187.

The protein belongs to the pantothenate synthetase family. Homodimer.

The protein localises to the cytoplasm. The enzyme catalyses (R)-pantoate + beta-alanine + ATP = (R)-pantothenate + AMP + diphosphate + H(+). It participates in cofactor biosynthesis; (R)-pantothenate biosynthesis; (R)-pantothenate from (R)-pantoate and beta-alanine: step 1/1. Its function is as follows. Catalyzes the condensation of pantoate with beta-alanine in an ATP-dependent reaction via a pantoyl-adenylate intermediate. This Enterococcus faecalis (strain ATCC 700802 / V583) protein is Pantothenate synthetase.